We begin with the raw amino-acid sequence, 212 residues long: Root-specific lectin (212 aa).

Residues 1 to 26 form the signal peptide; that stretch reads MKMMSTRALALGAAAVLAFAAATAHA. Residue Gln27 is modified to Pyrrolidone carboxylic acid. Chitin-binding type-1 domains are found at residues 27-68, 69-111, 112-154, and 155-197; these read QRCG…ACYT, SKRC…PCRA, DIKC…ACST, and DKPC…GCDG. Cystine bridges form between Cys29-Cys44, Cys38-Cys50, Cys43-Cys57, Cys61-Cys66, Cys72-Cys87, Cys81-Cys93, Cys86-Cys100, Cys104-Cys109, Cys115-Cys130, Cys124-Cys136, Cys129-Cys143, Cys147-Cys152, Cys158-Cys173, Cys167-Cys179, Cys172-Cys186, and Cys190-Cys195. Residue 36 to 38 participates in substrate binding; it reads MEC. 88–99 lines the substrate pocket; sequence SQWGYCGFGAEY. Substrate is bound at residue 140-141; sequence SE. Asn206 carries N-linked (GlcNAc...) asparagine glycosylation.

In roots.

Its function is as follows. Carbohydrate binding. The chain is Root-specific lectin from Hordeum vulgare (Barley).